The following is a 501-amino-acid chain: UPF0616 protein C1687.04 (501 aa).

Belongs to the UPF0616 family.

The protein resides in the cytoplasm. It localises to the nucleus. This Schizosaccharomyces pombe (strain 972 / ATCC 24843) (Fission yeast) protein is UPF0616 protein C1687.04.